The chain runs to 891 residues: von Willebrand factor A domain-containing protein 7 (891 aa).

Positions 1-28 (MLPTEVPQSHPGPSALLLLQLLLPPTSA) are cleaved as a signal peptide. N-linked (GlcNAc...) asparagine glycosylation is present at Asn-55. Positions 237 to 272 (PKPPGKCSHGGHFDRSSSQPPRGGINKDSTSPGFSP) are disordered. A VWFA domain is found at 313-506 (ASSLSFVLDT…SMAALVTLPL (194 aa)).

As to expression, expressed at low level in different cell lines.

It is found in the secreted. In Homo sapiens (Human), this protein is von Willebrand factor A domain-containing protein 7 (VWA7).